Consider the following 360-residue polypeptide: UDP-N-acetylglucosamine--N-acetylmuramyl-(pentapeptide) pyrophosphoryl-undecaprenol N-acetylglucosamine transferase (360 aa).

Residues 11 to 13, asparagine 117, arginine 160, serine 192, and glutamine 294 each bind UDP-N-acetyl-alpha-D-glucosamine; that span reads TGG.

Belongs to the glycosyltransferase 28 family. MurG subfamily.

Its subcellular location is the cell inner membrane. The enzyme catalyses di-trans,octa-cis-undecaprenyl diphospho-N-acetyl-alpha-D-muramoyl-L-alanyl-D-glutamyl-meso-2,6-diaminopimeloyl-D-alanyl-D-alanine + UDP-N-acetyl-alpha-D-glucosamine = di-trans,octa-cis-undecaprenyl diphospho-[N-acetyl-alpha-D-glucosaminyl-(1-&gt;4)]-N-acetyl-alpha-D-muramoyl-L-alanyl-D-glutamyl-meso-2,6-diaminopimeloyl-D-alanyl-D-alanine + UDP + H(+). The protein operates within cell wall biogenesis; peptidoglycan biosynthesis. Its function is as follows. Cell wall formation. Catalyzes the transfer of a GlcNAc subunit on undecaprenyl-pyrophosphoryl-MurNAc-pentapeptide (lipid intermediate I) to form undecaprenyl-pyrophosphoryl-MurNAc-(pentapeptide)GlcNAc (lipid intermediate II). This chain is UDP-N-acetylglucosamine--N-acetylmuramyl-(pentapeptide) pyrophosphoryl-undecaprenol N-acetylglucosamine transferase, found in Rickettsia felis (strain ATCC VR-1525 / URRWXCal2) (Rickettsia azadi).